The sequence spans 589 residues: uncharacterized protein (589 aa).

This is an uncharacterized protein from Bacillus anthracis.